Consider the following 280-residue polypeptide: Tryptophan synthase alpha chain (280 aa).

Residues Glu-49 and Asp-60 each act as proton acceptor in the active site.

Belongs to the TrpA family. In terms of assembly, tetramer of two alpha and two beta chains.

The enzyme catalyses (1S,2R)-1-C-(indol-3-yl)glycerol 3-phosphate + L-serine = D-glyceraldehyde 3-phosphate + L-tryptophan + H2O. It functions in the pathway amino-acid biosynthesis; L-tryptophan biosynthesis; L-tryptophan from chorismate: step 5/5. In terms of biological role, the alpha subunit is responsible for the aldol cleavage of indoleglycerol phosphate to indole and glyceraldehyde 3-phosphate. The chain is Tryptophan synthase alpha chain from Corynebacterium glutamicum (strain R).